The sequence spans 241 residues: Small ribosomal subunit protein uS3 (241 aa).

Residues 39-107 (IRKYLEKELK…ETHLNIVEVR (69 aa)) form the KH type-2 domain. Residues 214-241 (ASERRATEGDAAHGGGGDRERGRRRENA) form a disordered region.

It belongs to the universal ribosomal protein uS3 family. Part of the 30S ribosomal subunit. Forms a tight complex with proteins S10 and S14.

In terms of biological role, binds the lower part of the 30S subunit head. Binds mRNA in the 70S ribosome, positioning it for translation. In Mesorhizobium japonicum (strain LMG 29417 / CECT 9101 / MAFF 303099) (Mesorhizobium loti (strain MAFF 303099)), this protein is Small ribosomal subunit protein uS3.